The following is a 398-amino-acid chain: Phosphoglycerate kinase (398 aa).

Substrate contacts are provided by residues 21-23 (DFN), Arg-36, 59-62 (HLGR), Arg-119, and Arg-157. Residues Lys-208, Gly-296, Glu-327, and 354 to 357 (GGDS) each bind ATP.

The protein belongs to the phosphoglycerate kinase family. Monomer.

It is found in the cytoplasm. It carries out the reaction (2R)-3-phosphoglycerate + ATP = (2R)-3-phospho-glyceroyl phosphate + ADP. It functions in the pathway carbohydrate degradation; glycolysis; pyruvate from D-glyceraldehyde 3-phosphate: step 2/5. In Streptococcus equi subsp. zooepidemicus (strain H70), this protein is Phosphoglycerate kinase.